The primary structure comprises 758 residues: 5-methyltetrahydropteroyltriglutamate--homocysteine methyltransferase (758 aa).

5-methyltetrahydropteroyltri-L-glutamate-binding positions include R17–K20 and K113. Residues I433–S435 and E486 contribute to the L-homocysteine site. Residues I433–S435 and E486 each bind L-methionine. Residues R517 to C518 and W563 contribute to the 5-methyltetrahydropteroyltri-L-glutamate site. L-homocysteine is bound at residue D601. Residue D601 participates in L-methionine binding. E607 serves as a coordination point for 5-methyltetrahydropteroyltri-L-glutamate. Residues H643, C645, and E667 each coordinate Zn(2+). H696 functions as the Proton donor in the catalytic mechanism. C728 serves as a coordination point for Zn(2+).

Belongs to the vitamin-B12 independent methionine synthase family. Zn(2+) is required as a cofactor.

It catalyses the reaction 5-methyltetrahydropteroyltri-L-glutamate + L-homocysteine = tetrahydropteroyltri-L-glutamate + L-methionine. Its pathway is amino-acid biosynthesis; L-methionine biosynthesis via de novo pathway; L-methionine from L-homocysteine (MetE route): step 1/1. Its function is as follows. Catalyzes the transfer of a methyl group from 5-methyltetrahydrofolate to homocysteine resulting in methionine formation. This is 5-methyltetrahydropteroyltriglutamate--homocysteine methyltransferase from Nitrosomonas europaea (strain ATCC 19718 / CIP 103999 / KCTC 2705 / NBRC 14298).